Consider the following 125-residue polypeptide: Small ribosomal subunit protein eS8 (125 aa).

A compositionally biased stretch (polar residues) spans 1–11 (MAISQGKSTRL). Positions 1–38 (MAISQGKSTRLPSGARNVANRGKRKAELGRDPAETRVD) are disordered. Positions 25–38 (KAELGRDPAETRVD) are enriched in basic and acidic residues.

It belongs to the eukaryotic ribosomal protein eS8 family. Part of the 30S ribosomal subunit.

This is Small ribosomal subunit protein eS8 from Methanobrevibacter smithii (strain ATCC 35061 / DSM 861 / OCM 144 / PS).